Consider the following 43-residue polypeptide: Metallothionein A (43 aa).

The interval 1-16 (SCAGSCKCKNCRCRSC) is beta. The a divalent metal cation site is built by Cys-2, Cys-6, Cys-8, Cys-11, Cys-13, Cys-16, Cys-20, Cys-21, Cys-23, Cys-24, Cys-28, Cys-31, Cys-35, and Cys-37. The tract at residues 17–43 (RKSCCSCCPAGCNNCAKGCVCKEPASS) is alpha.

This sequence belongs to the metallothionein superfamily. Type 1 family.

Metallothioneins have a high content of cysteine residues that bind various heavy metals. The polypeptide is Metallothionein A (Colinus virginianus (Northern bobwhite)).